The following is a 193-amino-acid chain: MIGRIAGVLLEKNPPHLLIDCNGVGYEVDVPMSTFYNLPSTGERVVLLTQMIVREDAHLLYGFGTAEERSTFRELLKISGIGARMALAVLSGMSVHELAQTVTMQDAARLTRVPGIGKKTAERLLLELKGKIGADLGAMAGAASASDHASDILNALLALGYSEKEALTAVKNVPAGTGVSEGIKLALKALSKG.

The tract at residues 1 to 64 (MIGRIAGVLL…EDAHLLYGFG (64 aa)) is domain I. Residues 65–139 (TAEERSTFRE…GKIGADLGAM (75 aa)) are domain II. Residues 139 to 143 (MAGAA) are flexible linker. The tract at residues 144-193 (SASDHASDILNALLALGYSEKEALTAVKNVPAGTGVSEGIKLALKALSKG) is domain III.

Belongs to the RuvA family. As to quaternary structure, homotetramer. Forms an RuvA(8)-RuvB(12)-Holliday junction (HJ) complex. HJ DNA is sandwiched between 2 RuvA tetramers; dsDNA enters through RuvA and exits via RuvB. An RuvB hexamer assembles on each DNA strand where it exits the tetramer. Each RuvB hexamer is contacted by two RuvA subunits (via domain III) on 2 adjacent RuvB subunits; this complex drives branch migration. In the full resolvosome a probable DNA-RuvA(4)-RuvB(12)-RuvC(2) complex forms which resolves the HJ.

It localises to the cytoplasm. Its function is as follows. The RuvA-RuvB-RuvC complex processes Holliday junction (HJ) DNA during genetic recombination and DNA repair, while the RuvA-RuvB complex plays an important role in the rescue of blocked DNA replication forks via replication fork reversal (RFR). RuvA specifically binds to HJ cruciform DNA, conferring on it an open structure. The RuvB hexamer acts as an ATP-dependent pump, pulling dsDNA into and through the RuvAB complex. HJ branch migration allows RuvC to scan DNA until it finds its consensus sequence, where it cleaves and resolves the cruciform DNA. The chain is Holliday junction branch migration complex subunit RuvA from Paraburkholderia phytofirmans (strain DSM 17436 / LMG 22146 / PsJN) (Burkholderia phytofirmans).